Consider the following 303-residue polypeptide: Indole-3-glycerol phosphate synthase (303 aa).

This sequence belongs to the TrpC family.

The catalysed reaction is 1-(2-carboxyphenylamino)-1-deoxy-D-ribulose 5-phosphate + H(+) = (1S,2R)-1-C-(indol-3-yl)glycerol 3-phosphate + CO2 + H2O. It functions in the pathway amino-acid biosynthesis; L-tryptophan biosynthesis; L-tryptophan from chorismate: step 4/5. In Acaryochloris marina (strain MBIC 11017), this protein is Indole-3-glycerol phosphate synthase.